The primary structure comprises 427 residues: Mitochondrial distribution and morphology protein 12 (427 aa).

The region spanning M1–N387 is the SMP-LTD domain. Residues N81–N96 are compositionally biased toward basic and acidic residues. Disordered regions lie at residues N81–L168 and N387–E427. Residues L106–D133 are compositionally biased toward acidic residues. The span at L146 to A161 shows a compositional bias: polar residues. The segment covering N387 to D402 has biased composition (acidic residues). Basic and acidic residues predominate over residues N411–E427.

Belongs to the MDM12 family. As to quaternary structure, component of the ER-mitochondria encounter structure (ERMES) or MDM complex, composed of MMM1, MDM10, MDM12 and MDM34. An MMM1 homodimer associates with one molecule of MDM12 on each side in a pairwise head-to-tail manner, and the SMP-LTD domains of MMM1 and MDM12 generate a continuous hydrophobic tunnel for phospholipid trafficking.

The protein resides in the mitochondrion outer membrane. The protein localises to the endoplasmic reticulum membrane. Its function is as follows. Component of the ERMES/MDM complex, which serves as a molecular tether to connect the endoplasmic reticulum (ER) and mitochondria. Components of this complex are involved in the control of mitochondrial shape and protein biogenesis, and function in nonvesicular lipid trafficking between the ER and mitochondria. MDM12 is required for the interaction of the ER-resident membrane protein MMM1 and the outer mitochondrial membrane-resident beta-barrel protein MDM10. The MDM12-MMM1 subcomplex functions in the major beta-barrel assembly pathway that is responsible for biogenesis of all mitochondrial outer membrane beta-barrel proteins, and acts in a late step after the SAM complex. The MDM10-MDM12-MMM1 subcomplex further acts in the TOM40-specific pathway after the action of the MDM12-MMM1 complex. Essential for establishing and maintaining the structure of mitochondria and maintenance of mtDNA nucleoids. The sequence is that of Mitochondrial distribution and morphology protein 12 from Candida albicans (strain WO-1) (Yeast).